The sequence spans 303 residues: Succinate--CoA ligase [ADP-forming] subunit alpha (303 aa).

CoA contacts are provided by residues 20–23 (TGSE), lysine 46, and 108–110 (ITE). Position 173 (tyrosine 173) interacts with substrate. Histidine 259 functions as the Tele-phosphohistidine intermediate in the catalytic mechanism.

Belongs to the succinate/malate CoA ligase alpha subunit family. In terms of assembly, heterotetramer of two alpha and two beta subunits.

It catalyses the reaction succinate + ATP + CoA = succinyl-CoA + ADP + phosphate. The enzyme catalyses GTP + succinate + CoA = succinyl-CoA + GDP + phosphate. It participates in carbohydrate metabolism; tricarboxylic acid cycle; succinate from succinyl-CoA (ligase route): step 1/1. In terms of biological role, succinyl-CoA synthetase functions in the citric acid cycle (TCA), coupling the hydrolysis of succinyl-CoA to the synthesis of either ATP or GTP and thus represents the only step of substrate-level phosphorylation in the TCA. The alpha subunit of the enzyme binds the substrates coenzyme A and phosphate, while succinate binding and nucleotide specificity is provided by the beta subunit. The sequence is that of Succinate--CoA ligase [ADP-forming] subunit alpha from Mycobacterium tuberculosis (strain CDC 1551 / Oshkosh).